The following is an 855-amino-acid chain: DNA mismatch repair protein MutS (855 aa).

616-623 provides a ligand contact to ATP; sequence GPNMGGKS.

It belongs to the DNA mismatch repair MutS family.

This protein is involved in the repair of mismatches in DNA. It is possible that it carries out the mismatch recognition step. This protein has a weak ATPase activity. This chain is DNA mismatch repair protein MutS, found in Salmonella schwarzengrund (strain CVM19633).